The following is a 475-amino-acid chain: Equilibrative nucleoside transporter 3 (475 aa).

Residues 1–24 are disordered; the sequence is MAVVSEDDFQHSSNSTYRTTSSSL. The Cytoplasmic segment spans residues 1-53; that stretch reads MAVVSEDDFQHSSNSTYRTTSSSLRADQEALLEKLLDRPPPGLQRPEDRFCGT. Over residues 12–23 the composition is skewed to low complexity; the sequence is SSNSTYRTTSSS. A phosphoserine mark is found at Ser21 and Ser23. Residues 31 to 32 carry the Dileucine internalization motif motif; sequence LL. The helical transmembrane segment at 54-74 threads the bilayer; that stretch reads YIIFFSLGIGSLLPWNFFITA. Residues 75-105 are Extracellular-facing; it reads KEYWMFKLRNSSSPATGEDPEGSDILNYFES. The N-linked (GlcNAc...) asparagine glycan is linked to Asn84. The chain crosses the membrane as a helical span at residues 106–126; it reads YLAVASTVPSMLCLVANFLLV. At 127–134 the chain is on the cytoplasmic side; the sequence is NRVAVHIR. Residues 135-155 form a helical membrane-spanning segment; sequence VLASLTVILAIFMVITALVKV. The Extracellular portion of the chain corresponds to 156 to 162; it reads DTSSWTR. A helical membrane pass occupies residues 163–183; sequence GFFAVTIVCMVILSGASTVFS. The Cytoplasmic segment spans residues 184 to 199; the sequence is SSIYGMTGSFPMRNSQ. Residues 200–220 traverse the membrane as a helical segment; it reads ALISGGAMGGTVSAVASLVDL. The Extracellular segment spans residues 221–230; it reads AASSDVRNSA. The helical transmembrane segment at 231-251 threads the bilayer; sequence LAFFLTATVFLVLCMGLYLLL. Topologically, residues 252 to 305 are cytoplasmic; the sequence is SRLEYARYYMRPVLAAHVFSGEEELPQDSLSAPSVASRFIDSHTPPLRPILKKT. A helical membrane pass occupies residues 306 to 326; that stretch reads ASLGFCVTYVFFITSLIYPAI. The Extracellular segment spans residues 327–337; the sequence is CTNIESLNKGS. Residues 338–358 traverse the membrane as a helical segment; that stretch reads GSLWTTKFFIPLTTFLLYNFA. Topologically, residues 359–377 are cytoplasmic; sequence DLCGRQLTAWIQVPGPNSK. The helical transmembrane segment at 378–398 threads the bilayer; the sequence is ALPGFVLLRTCLIPLFVLCNY. The Extracellular segment spans residues 399 to 415; the sequence is QPRVHLKTVVFQSDVYP. Residues 416 to 436 traverse the membrane as a helical segment; that stretch reads ALLSSLLGLSNGYLSTLALLY. The Cytoplasmic portion of the chain corresponds to 437-454; the sequence is GPKIVPRELAEATGVVMS. The chain crosses the membrane as a helical span at residues 455 to 475; it reads FYVCLGLTLGSACSTLLVHLI.

It belongs to the SLC29A/ENT transporter (TC 2.A.57) family. Widely expressed in both adult and fetal tissues. Highest levels in placenta, uterus, ovary, spleen, lymph node and bone marrow. Expressed in liver. Lowest levels in brain and heart. Expressed in macrophages.

It localises to the lysosome membrane. The protein localises to the late endosome membrane. It is found in the mitochondrion membrane. The protein resides in the cell membrane. It carries out the reaction adenosine(in) = adenosine(out). The catalysed reaction is guanosine(in) = guanosine(out). It catalyses the reaction inosine(in) = inosine(out). The enzyme catalyses uridine(out) = uridine(in). It carries out the reaction cytidine(in) = cytidine(out). The catalysed reaction is thymidine(in) = thymidine(out). It catalyses the reaction 2'-deoxyadenosine(in) = 2'-deoxyadenosine(out). The enzyme catalyses 2'-deoxycytidine(in) = 2'-deoxycytidine(out). It carries out the reaction guanine(out) = guanine(in). The catalysed reaction is uracil(in) = uracil(out). It catalyses the reaction (R)-noradrenaline(out) = (R)-noradrenaline(in). The enzyme catalyses dopamine(out) = dopamine(in). It carries out the reaction serotonin(out) = serotonin(in). The catalysed reaction is tyramine(in) = tyramine(out). It catalyses the reaction ATP(in) = ATP(out). Functionally, uniporter that mediates the facilitative transport of nucleoside across lysosomal and mitochondrial membranes. Functions as a non-electrogenic Na(+)-independent transporter. Substrate transport is pH-dependent and enhanced under acidic condition, probably reflecting the location of the transporter in acidic intracellular compartments. Proton is not a cotransporting ion but most likely change the ionization state of the transporter which dictates transport-permissible/impermissible conformation for nucleoside translocation. May direct the nucleoside transport from lysosomes to cytosol or cytosol to mitochondria to facilitate the fundamental function of salvage synthesis of nucleic acids. Involved in the transport of nucleosides (adenosine, guanosine, uridine, thymidine, cytidine and inosine) and deoxynucleosides (deoxyadenosine, deoxycytidine). Also mediates transport of purine nucleobases (adenine, guanine) and pyrimidine nucleobases (uracil). Also able to transport monoamine neurotransmitters dopamine, serotonin, noradrenaline and tyramine. Capable of transporting ATP. Mediates nucleoside export from lysosomes in macrophages, which regulates macrophage functions and numbers. The polypeptide is Equilibrative nucleoside transporter 3 (Homo sapiens (Human)).